Here is an 850-residue protein sequence, read N- to C-terminus: G-type lectin S-receptor-like serine/threonine-protein kinase CES101 (850 aa).

An N-terminal signal peptide occupies residues 1-22 (MWSNCIFLTLFTFYLFLGQSCC). At 23–423 (QTDTLLQGQY…IKGSKLAATW (401 aa)) the chain is on the extracellular side. Residues 24-144 (TDTLLQGQYL…DSDGSMKRTL (121 aa)) form the Bulb-type lectin domain. N-linked (GlcNAc...) asparagine glycosylation is found at asparagine 55, asparagine 118, asparagine 194, and asparagine 374. Positions 334–416 (CSRFGYTFRE…PRTIYIRIKG (83 aa)) constitute a PAN domain. 2 cysteine pairs are disulfide-bonded: cysteine 367-cysteine 390 and cysteine 371-cysteine 377. Residues 424–444 (LVVVASLFLIIPVTWLIIYLV) form a helical membrane-spanning segment. The Cytoplasmic segment spans residues 445 to 850 (LRKFKIKGTN…RVTITVMEAR (406 aa)). The Protein kinase domain maps to 527 to 816 (FSDANKLGEG…ALSLPKEPAF (290 aa)). Residues 533–541 (LGEGGFGPV) and lysine 555 contribute to the ATP site. Serine 561 bears the Phosphoserine mark. Positions 616–633 (LRKIVLDWKLRFRIMEGI) are caM-binding. The active-site Proton acceptor is aspartate 652. Phosphoserine is present on serine 669. Residue threonine 686 is modified to Phosphothreonine. 2 positions are modified to phosphoserine: serine 730 and serine 838. The residue at position 845 (threonine 845) is a Phosphothreonine.

The protein belongs to the protein kinase superfamily. Ser/Thr protein kinase family. As to expression, mostly expressed in leaves, and, to a lower extent, in roots and flowers.

Its subcellular location is the cell membrane. It carries out the reaction L-seryl-[protein] + ATP = O-phospho-L-seryl-[protein] + ADP + H(+). The catalysed reaction is L-threonyl-[protein] + ATP = O-phospho-L-threonyl-[protein] + ADP + H(+). Its function is as follows. Promotes the expression of genes involved in photosynthesis at least in dedifferentiated calli. The polypeptide is G-type lectin S-receptor-like serine/threonine-protein kinase CES101 (CES101) (Arabidopsis thaliana (Mouse-ear cress)).